A 788-amino-acid chain; its full sequence is Histidine--tRNA ligase, cytoplasmic (788 aa).

The interval 252-286 (PQACEENEAGSSTENPHASGEKPKGDKKSKKKKTL) is disordered.

It belongs to the class-II aminoacyl-tRNA synthetase family. In terms of assembly, homodimer.

The enzyme catalyses tRNA(His) + L-histidine + ATP = L-histidyl-tRNA(His) + AMP + diphosphate + H(+). The polypeptide is Histidine--tRNA ligase, cytoplasmic (Oryza sativa subsp. japonica (Rice)).